Here is a 238-residue protein sequence, read N- to C-terminus: Ribonuclease PH (238 aa).

Phosphate contacts are provided by residues R86 and 124–126; that span reads GTR.

The protein belongs to the RNase PH family. In terms of assembly, homohexameric ring arranged as a trimer of dimers.

The enzyme catalyses tRNA(n+1) + phosphate = tRNA(n) + a ribonucleoside 5'-diphosphate. In terms of biological role, phosphorolytic 3'-5' exoribonuclease that plays an important role in tRNA 3'-end maturation. Removes nucleotide residues following the 3'-CCA terminus of tRNAs; can also add nucleotides to the ends of RNA molecules by using nucleoside diphosphates as substrates, but this may not be physiologically important. Probably plays a role in initiation of 16S rRNA degradation (leading to ribosome degradation) during starvation. In Acinetobacter baylyi (strain ATCC 33305 / BD413 / ADP1), this protein is Ribonuclease PH.